Here is a 98-residue protein sequence, read N- to C-terminus: PqqA binding protein (98 aa).

It belongs to the PqqD family. Monomer. Interacts with PqqE.

It functions in the pathway cofactor biosynthesis; pyrroloquinoline quinone biosynthesis. In terms of biological role, functions as a PqqA binding protein and presents PqqA to PqqE, in the pyrroloquinoline quinone (PQQ) biosynthetic pathway. The chain is PqqA binding protein from Rhizobium meliloti (strain 1021) (Ensifer meliloti).